The chain runs to 527 residues: Anthranilate synthase component 1 1 (527 aa).

Residue Ser-52 coordinates L-tryptophan. Residues 53–72 (AEKTPASDPDGAFTPDTTTE) form a disordered region. Residue 298–300 (PYM) participates in L-tryptophan binding. Residue 333 to 334 (GT) participates in chorismate binding. Glu-360 serves as a coordination point for Mg(2+). Chorismate contacts are provided by residues Tyr-448, Arg-468, 486 to 488 (GAG), and Gly-488. Glu-501 contacts Mg(2+).

This sequence belongs to the anthranilate synthase component I family. As to quaternary structure, tetramer of two components I and two components II. Mg(2+) serves as cofactor.

The catalysed reaction is chorismate + L-glutamine = anthranilate + pyruvate + L-glutamate + H(+). Its pathway is amino-acid biosynthesis; L-tryptophan biosynthesis; L-tryptophan from chorismate: step 1/5. The polypeptide is Anthranilate synthase component 1 1 (trpE1) (Halobacterium salinarum (strain ATCC 700922 / JCM 11081 / NRC-1) (Halobacterium halobium)).